The sequence spans 456 residues: MATFARMVKGQVRYYSAPLDMAIPASKQKYIPASGTYPKGFSVSGTHVGVKASNTRFPDLALISSETPCSAAAVFTTNKFQAAPVQASKNTLKATQGEGIRSVVINSGCANAVTGKGGLEDAVSMGAKVDECNGLAQPSTLVMSTGVIGQRLPISKILDKIPTAHSTLSSTHDSWLTTARAICTTDTFPKLLSQTFTLPSSPNRTYRLAGMTKGAGMIHPNMATLLGVLCTDAPIASSALQPLLKHAVSRSFNSISVDGDTSTNDTIAILANGAAGGAPITSTSSADYTAMQNVLTSFAQSLSQLVVRDGEGATKFVTVRVQNSPDYESARLIASTIARSPLVKTALYGKDANWGRILCAIGYTQGVAEGTVVPERTSVSFKPVDGSAELKLLVNGEPEQVDEDRAAVILQEEDLEIVVDLGGGEKGEKGLGGEEAIYWFCDFSHEYVTINGDYRT.

Substrate-binding residues include threonine 184, lysine 213, threonine 224, glutamate 311, asparagine 451, and threonine 456. The Nucleophile role is filled by threonine 224.

This sequence belongs to the ArgJ family. Heterodimer of an alpha and a beta chain. Post-translationally, the alpha and beta chains are autoproteolytically processed from a single precursor protein within the mitochondrion.

It localises to the mitochondrion matrix. The enzyme catalyses N(2)-acetyl-L-ornithine + L-glutamate = N-acetyl-L-glutamate + L-ornithine. It catalyses the reaction L-glutamate + acetyl-CoA = N-acetyl-L-glutamate + CoA + H(+). It functions in the pathway amino-acid biosynthesis; L-arginine biosynthesis; L-ornithine and N-acetyl-L-glutamate from L-glutamate and N(2)-acetyl-L-ornithine (cyclic): step 1/1. It participates in amino-acid biosynthesis; L-arginine biosynthesis; N(2)-acetyl-L-ornithine from L-glutamate: step 1/4. In terms of biological role, catalyzes two activities which are involved in the cyclic version of arginine biosynthesis: the synthesis of acetylglutamate from glutamate and acetyl-CoA, and of ornithine by transacetylation between acetylornithine and glutamate. This is Arginine biosynthesis bifunctional protein ArgJ, mitochondrial from Aspergillus niger (strain ATCC MYA-4892 / CBS 513.88 / FGSC A1513).